A 233-amino-acid chain; its full sequence is Modulator of macroautophagy TMEM150B (233 aa).

Over 1–7 (MWGYLSL) the chain is Cytoplasmic. Residues 8 to 28 (MPVFLAVWAISGVWIVFAIAV) traverse the membrane as a helical segment. Over 29-51 (TNRTVDLSKGFPYISICGSFPPQ) the chain is Extracellular. The N-linked (GlcNAc...) asparagine glycan is linked to N30. Residues 52–72 (SCIFSQVLNMGAALAAWICIV) traverse the membrane as a helical segment. The Cytoplasmic segment spans residues 73–84 (RYHQLRDWGVRR). The chain crosses the membrane as a helical span at residues 85–105 (WPNQLILWTGLLCALGTSVVG). The Extracellular segment spans residues 106-116 (NFQEKNQRPTH). The helical transmembrane segment at 117–137 (LAGAFLAFILGNVYFWLQLLL) threads the bilayer. Topologically, residues 138–155 (WRLKRLPQPGAAWIGPLR) are cytoplasmic. A helical membrane pass occupies residues 156–176 (LGLCSVCTILIVAMIVLHACS). Topologically, residues 177–185 (LRSVSAACE) are extracellular. A helical membrane pass occupies residues 186 to 206 (WVVAMLLFALFGLLAVDFSAL). The Cytoplasmic portion of the chain corresponds to 207–233 (ESCTLCVQPWPSLSPPPASPISLPVQL).

The protein belongs to the DRAM/TMEM150 family. Highly expressed in the colon and lung with comparatively high levels also detectable in the lymph nodes, placenta, duodenum, peripheral blood mononuclear cells and spleen.

It localises to the cell membrane. It is found in the endosome membrane. Its subcellular location is the cytoplasmic vesicle. The protein localises to the autophagosome membrane. Its function is as follows. Modulator of macroautophagy that causes accumulation of autophagosomes under basal conditions and enhances autophagic flux. Represses cell death and promotes long-term clonogenic survival of cells grown in the absence of glucose in a macroautophagy-independent manner. May have some role in extracellular matrix engulfment or growth factor receptor recycling, both of which can modulate cell survival. This is Modulator of macroautophagy TMEM150B from Homo sapiens (Human).